The sequence spans 203 residues: Superoxide dismutase [Mn] (203 aa).

Residues His27, His81, Asp164, and His168 each coordinate Mn(2+).

This sequence belongs to the iron/manganese superoxide dismutase family. Homodimer. Requires Mn(2+) as cofactor.

The enzyme catalyses 2 superoxide + 2 H(+) = H2O2 + O2. Its function is as follows. Destroys superoxide anion radicals which are normally produced within the cells and which are toxic to biological systems. Partially complements double sodA-sodB deletions in E.coli. This is Superoxide dismutase [Mn] from Pseudomonas aeruginosa (strain ATCC 15692 / DSM 22644 / CIP 104116 / JCM 14847 / LMG 12228 / 1C / PRS 101 / PAO1).